Reading from the N-terminus, the 287-residue chain is MPELPEVETVRRGLEPVLSGARLSSVRANRPDLRFPLPDGFVQRLTGARILRLDRRAKYILAPLDRGDTLVMHLGMTGRFEIAAPEGTVRPGDFAREVTPDDKHAHVVFQTEDGATVTYFDPRRFGFMDLIPTDRVSHHAWFAAMGPEPLGEGFDARTLEKAFANRKQGPKTLLLDQRTVAGLGNIYVCEALHRSGISPFKPSGNIAKKRLTPLTAAIKDVLAEAVEVGGSTLKDFAAADGALGYFQHRFRVYDREGEPCPTPACKGVIAREVQAGRSTFFCPVCQV.

P2 acts as the Schiff-base intermediate with DNA in catalysis. Catalysis depends on E3, which acts as the Proton donor. The Proton donor; for beta-elimination activity role is filled by K58. Positions 104, 123, and 166 each coordinate DNA. The segment at 251–287 (RVYDREGEPCPTPACKGVIAREVQAGRSTFFCPVCQV) adopts an FPG-type zinc-finger fold. R277 functions as the Proton donor; for delta-elimination activity in the catalytic mechanism.

Belongs to the FPG family. In terms of assembly, monomer. Requires Zn(2+) as cofactor.

The enzyme catalyses Hydrolysis of DNA containing ring-opened 7-methylguanine residues, releasing 2,6-diamino-4-hydroxy-5-(N-methyl)formamidopyrimidine.. The catalysed reaction is 2'-deoxyribonucleotide-(2'-deoxyribose 5'-phosphate)-2'-deoxyribonucleotide-DNA = a 3'-end 2'-deoxyribonucleotide-(2,3-dehydro-2,3-deoxyribose 5'-phosphate)-DNA + a 5'-end 5'-phospho-2'-deoxyribonucleoside-DNA + H(+). Its function is as follows. Involved in base excision repair of DNA damaged by oxidation or by mutagenic agents. Acts as a DNA glycosylase that recognizes and removes damaged bases. Has a preference for oxidized purines, such as 7,8-dihydro-8-oxoguanine (8-oxoG). Has AP (apurinic/apyrimidinic) lyase activity and introduces nicks in the DNA strand. Cleaves the DNA backbone by beta-delta elimination to generate a single-strand break at the site of the removed base with both 3'- and 5'-phosphates. In Caulobacter vibrioides (strain ATCC 19089 / CIP 103742 / CB 15) (Caulobacter crescentus), this protein is Formamidopyrimidine-DNA glycosylase.